Consider the following 75-residue polypeptide: ATP synthase subunit 9, mitochondrial (75 aa).

A run of 2 helical transmembrane segments spans residues 10–30 (LVLG…GILF) and 55–75 (FALV…VYFI).

This sequence belongs to the ATPase C chain family. As to quaternary structure, F-type ATPases have 2 components, CF(1) - the catalytic core - and CF(0) - the membrane proton channel. CF(1) has five subunits: alpha(3), beta(3), gamma(1), delta(1), epsilon(1). CF(0) has three main subunits: a, b and c.

It localises to the mitochondrion membrane. Mitochondrial membrane ATP synthase (F(1)F(0) ATP synthase or Complex V) produces ATP from ADP in the presence of a proton gradient across the membrane which is generated by electron transport complexes of the respiratory chain. F-type ATPases consist of two structural domains, F(1) - containing the extramembraneous catalytic core and F(0) - containing the membrane proton channel, linked together by a central stalk and a peripheral stalk. During catalysis, ATP synthesis in the catalytic domain of F(1) is coupled via a rotary mechanism of the central stalk subunits to proton translocation. Part of the complex F(0) domain. A homomeric c-ring of probably 10 subunits is part of the complex rotary element. The polypeptide is ATP synthase subunit 9, mitochondrial (ATP9) (Paramecium tetraurelia).